The following is a 562-amino-acid chain: NAD-dependent malic enzyme (562 aa).

Tyrosine 101 functions as the Proton donor in the catalytic mechanism. NAD(+) is bound at residue arginine 154. Lysine 172 functions as the Proton acceptor in the catalytic mechanism. Residues glutamate 243, aspartate 244, and aspartate 267 each contribute to the a divalent metal cation site. NAD(+) contacts are provided by aspartate 267 and asparagine 415.

The protein belongs to the malic enzymes family. In terms of assembly, homotetramer. Mg(2+) serves as cofactor. It depends on Mn(2+) as a cofactor.

It carries out the reaction (S)-malate + NAD(+) = pyruvate + CO2 + NADH. The enzyme catalyses oxaloacetate + H(+) = pyruvate + CO2. This is NAD-dependent malic enzyme from Shewanella sediminis (strain HAW-EB3).